A 170-amino-acid chain; its full sequence is NADH-quinone oxidoreductase subunit B (170 aa).

Positions 37, 38, 102, and 131 each coordinate [4Fe-4S] cluster.

It belongs to the complex I 20 kDa subunit family. In terms of assembly, NDH-1 is composed of 14 different subunits. Subunits NuoB, C, D, E, F, and G constitute the peripheral sector of the complex. The cofactor is [4Fe-4S] cluster.

Its subcellular location is the cell inner membrane. The enzyme catalyses a quinone + NADH + 5 H(+)(in) = a quinol + NAD(+) + 4 H(+)(out). NDH-1 shuttles electrons from NADH, via FMN and iron-sulfur (Fe-S) centers, to quinones in the respiratory chain. The immediate electron acceptor for the enzyme in this species is believed to be ubiquinone. Couples the redox reaction to proton translocation (for every two electrons transferred, four hydrogen ions are translocated across the cytoplasmic membrane), and thus conserves the redox energy in a proton gradient. The protein is NADH-quinone oxidoreductase subunit B of Geotalea daltonii (strain DSM 22248 / JCM 15807 / FRC-32) (Geobacter daltonii).